Consider the following 128-residue polypeptide: Fluoride-specific ion channel FluC (128 aa).

4 helical membrane-spanning segments follow: residues Leu-5–Phe-25, Phe-34–Phe-54, Phe-67–Val-87, and Phe-99–Ile-119. Gly-74 and Thr-77 together coordinate Na(+).

The protein belongs to the fluoride channel Fluc/FEX (TC 1.A.43) family.

The protein localises to the cell inner membrane. It carries out the reaction fluoride(in) = fluoride(out). Na(+) is not transported, but it plays an essential structural role and its presence is essential for fluoride channel function. In terms of biological role, fluoride-specific ion channel. Important for reducing fluoride concentration in the cell, thus reducing its toxicity. This is Fluoride-specific ion channel FluC from Haemophilus influenzae (strain PittGG).